Here is a 597-residue protein sequence, read N- to C-terminus: Elongation factor 4 (597 aa).

One can recognise a tr-type G domain in the interval 2–184 (DHIRNFSIIA…SLIAKVPPPK (183 aa)). Residues 14–19 (DHGKST) and 131–134 (NKID) each bind GTP.

This sequence belongs to the TRAFAC class translation factor GTPase superfamily. Classic translation factor GTPase family. LepA subfamily.

It localises to the cell inner membrane. The enzyme catalyses GTP + H2O = GDP + phosphate + H(+). Functionally, required for accurate and efficient protein synthesis under certain stress conditions. May act as a fidelity factor of the translation reaction, by catalyzing a one-codon backward translocation of tRNAs on improperly translocated ribosomes. Back-translocation proceeds from a post-translocation (POST) complex to a pre-translocation (PRE) complex, thus giving elongation factor G a second chance to translocate the tRNAs correctly. Binds to ribosomes in a GTP-dependent manner. This is Elongation factor 4 from Burkholderia ambifaria (strain MC40-6).